Here is a 218-residue protein sequence, read N- to C-terminus: Nucleoid occlusion factor SlmA (218 aa).

Positions 30-90 (ERRQQVLTVL…ALIEHIESTL (61 aa)) constitute an HTH tetR-type domain. The segment at residues 53-72 (TTARLAKEVGVSEAALYRYF) is a DNA-binding region (H-T-H motif).

Belongs to the nucleoid occlusion factor SlmA family. As to quaternary structure, homodimer. Interacts with FtsZ.

Its subcellular location is the cytoplasm. It localises to the nucleoid. Required for nucleoid occlusion (NO) phenomenon, which prevents Z-ring formation and cell division over the nucleoid. Acts as a DNA-associated cell division inhibitor that binds simultaneously chromosomal DNA and FtsZ, and disrupts the assembly of FtsZ polymers. SlmA-DNA-binding sequences (SBS) are dispersed on non-Ter regions of the chromosome, preventing FtsZ polymerization at these regions. In Haemophilus influenzae (strain PittGG), this protein is Nucleoid occlusion factor SlmA.